Consider the following 87-residue polypeptide: Probable acyl carrier protein PigG (87 aa).

Residues 1–78 enclose the Carrier domain; sequence MLESKLINHI…SMVALVQRLK (78 aa). An O-(pantetheine 4'-phosphoryl)serine modification is found at Ser36.

The protein operates within antibiotic biosynthesis; prodigiosin biosynthesis. Involved in the biosynthesis of 4-methoxy-2,2'-bipyrrole-5-carbaldehyde (MBC), one of the terminal products involved in the biosynthesis of the red antibiotic prodigiosin (Pig). Carrier of the L-prolyl group transferred from L-prolyl-AMP by PigI. In Serratia sp. (strain ATCC 39006) (Prodigiosinella confusarubida), this protein is Probable acyl carrier protein PigG.